We begin with the raw amino-acid sequence, 114 residues long: T cell receptor beta variable 6-9 (114 aa).

The first 21 residues, 1 to 21 (MSIGLLCCVAFSLLWAGPVNA), serve as a signal peptide directing secretion. The Ig-like domain occupies 22-114 (GVTQTPKFHI…TSVYFCASSY (93 aa)). Cys-42 and Cys-110 are disulfide-bonded. Asn-84 carries N-linked (GlcNAc...) asparagine glycosylation.

In terms of assembly, alpha-beta TR is a heterodimer composed of an alpha and beta chain; disulfide-linked. The alpha-beta TR is associated with the transmembrane signaling CD3 coreceptor proteins to form the TR-CD3 (TcR or TCR). The assembly of alpha-beta TR heterodimers with CD3 occurs in the endoplasmic reticulum where a single alpha-beta TR heterodimer associates with one CD3D-CD3E heterodimer, one CD3G-CD3E heterodimer and one CD247 homodimer forming a stable octameric structure. CD3D-CD3E and CD3G-CD3E heterodimers preferentially associate with TR alpha and TR beta chains, respectively. The association of the CD247 homodimer is the last step of TcR assembly in the endoplasmic reticulum and is required for transport to the cell surface.

It localises to the cell membrane. Its function is as follows. V region of the variable domain of T cell receptor (TR) beta chain that participates in the antigen recognition. Alpha-beta T cell receptors are antigen specific receptors which are essential to the immune response and are present on the cell surface of T lymphocytes. Recognize peptide-major histocompatibility (MH) (pMH) complexes that are displayed by antigen presenting cells (APC), a prerequisite for efficient T cell adaptive immunity against pathogens. Binding of alpha-beta TR to pMH complex initiates TR-CD3 clustering on the cell surface and intracellular activation of LCK that phosphorylates the ITAM motifs of CD3G, CD3D, CD3E and CD247 enabling the recruitment of ZAP70. In turn ZAP70 phosphorylates LAT, which recruits numerous signaling molecules to form the LAT signalosome. The LAT signalosome propagates signal branching to three major signaling pathways, the calcium, the mitogen-activated protein kinase (MAPK) kinase and the nuclear factor NF-kappa-B (NF-kB) pathways, leading to the mobilization of transcription factors that are critical for gene expression and essential for T cell growth and differentiation. The T cell repertoire is generated in the thymus, by V-(D)-J rearrangement. This repertoire is then shaped by intrathymic selection events to generate a peripheral T cell pool of self-MH restricted, non-autoaggressive T cells. Post-thymic interaction of alpha-beta TR with the pMH complexes shapes TR structural and functional avidity. In Homo sapiens (Human), this protein is T cell receptor beta variable 6-9.